Reading from the N-terminus, the 347-residue chain is Cell shape-determining protein MreB (347 aa).

Residues 19-21, 165-167, 213-216, and 295-298 each bind ATP; these read TAN, GGT, ERIK, and GGAL.

Belongs to the FtsA/MreB family. As to quaternary structure, forms polymers in the presence of ATP. Forms pairs of protofilaments that adopt an antiparallel arrangement and bind to lipids.

The protein resides in the cytoplasm. Functionally, forms membrane-associated dynamic filaments that are essential for cell shape determination. Acts by regulating cell wall synthesis and cell elongation, and thus cell shape. A feedback loop between cell geometry and MreB localization may maintain elongated cell shape by targeting cell wall growth to regions of negative cell wall curvature. Required for mid-cell peptidoglycan synthesis and cell division. Directs the localization of the cytosolic peptidoglycan precursor-synthesizing enzyme MurG. Also required for proper chromosome segregation. Directs the segregation of origin-proximal but not origin-distal loci. The protein is Cell shape-determining protein MreB of Caulobacter vibrioides (strain NA1000 / CB15N) (Caulobacter crescentus).